A 95-amino-acid polypeptide reads, in one-letter code: ESAT-6-like protein EsxH (95 aa).

This sequence belongs to the WXG100 family. ESAT-6 subfamily. In terms of assembly, forms a tight 1:1 complex with EsxG.

The protein resides in the secreted. The sequence is that of ESAT-6-like protein EsxH from Mycolicibacterium smegmatis (strain ATCC 700084 / mc(2)155) (Mycobacterium smegmatis).